Here is a 143-residue protein sequence, read N- to C-terminus: Large ribosomal subunit protein uL13c (143 aa).

This sequence belongs to the universal ribosomal protein uL13 family. As to quaternary structure, part of the 50S ribosomal subunit.

Its subcellular location is the plastid. The protein localises to the chloroplast. This is Large ribosomal subunit protein uL13c from Guillardia theta (Cryptophyte).